Here is a 218-residue protein sequence, read N- to C-terminus: GTP cyclohydrolase 1 (218 aa).

Zn(2+) contacts are provided by cysteine 109, histidine 112, and cysteine 180.

Belongs to the GTP cyclohydrolase I family. As to quaternary structure, toroid-shaped homodecamer, composed of two pentamers of five dimers.

It catalyses the reaction GTP + H2O = 7,8-dihydroneopterin 3'-triphosphate + formate + H(+). Its pathway is cofactor biosynthesis; 7,8-dihydroneopterin triphosphate biosynthesis; 7,8-dihydroneopterin triphosphate from GTP: step 1/1. This chain is GTP cyclohydrolase 1, found in Haemophilus ducreyi (strain 35000HP / ATCC 700724).